Reading from the N-terminus, the 901-residue chain is Protein translocase subunit SecA (901 aa).

ATP is bound by residues glutamine 89, 107-111 (GEGKT), and aspartate 502. Zn(2+)-binding residues include cysteine 884, cysteine 886, cysteine 895, and histidine 896.

The protein belongs to the SecA family. In terms of assembly, monomer and homodimer. Part of the essential Sec protein translocation apparatus which comprises SecA, SecYEG and auxiliary proteins SecDF-YajC and YidC. The cofactor is Zn(2+).

The protein resides in the cell inner membrane. It is found in the cytoplasm. The enzyme catalyses ATP + H2O + cellular proteinSide 1 = ADP + phosphate + cellular proteinSide 2.. Functionally, part of the Sec protein translocase complex. Interacts with the SecYEG preprotein conducting channel. Has a central role in coupling the hydrolysis of ATP to the transfer of proteins into and across the cell membrane, serving both as a receptor for the preprotein-SecB complex and as an ATP-driven molecular motor driving the stepwise translocation of polypeptide chains across the membrane. This Sinorhizobium fredii (strain NBRC 101917 / NGR234) protein is Protein translocase subunit SecA.